The primary structure comprises 883 residues: MSKELSSKYNPAEVEAGRYQKWLDADVFKPSGDQKAKPYSIVIPPPNVTGKLHLGHAWDTTLQDIIIRQKRMQGFDTLWLPGMDHAGIATQAKVEERLRGEGISRYDLGRESFLTKVWEWKDEYATTIKEQWGKMGLSVDYSRERFTLDEGLSKAVRKVFVDLYKKGWIYRGEFIINWDPAARTALSDIEVIHKDVEGAFYHMNYMLEDGSRALEVATTRPETMFGDVAIAVNPEDPRYKDLIGKNVILPIANKLIPIVGDEHADPEFGTGVVKITPAHDPNDFLVGQRHNLPQVNIMNDDGTMNELVFEFSGMDRFEARKAVVAKLEEIGALVKIEKRVHSVGHSERTGVVVEPRLSTQWFVKMDQLAKNAIANQDTEDKVEFYPPRFNDTFLQWMENVHDWVISRQLWWGHQIPAWYNADGEMYVGEEAPEGDGWTQDEDVLDTWFSSALWPFSTMGWPEVDSEDFKRYFPTSTLVTGYDIIFFWVSRMIFQSLEFTGRQPFQNVLIHGLIRDEQGRKMSKSLGNGIDPMDVIEKYGADALRWFLSNGSAPGQDVRFSYEKMDASWNFINKIWNISRYILMNNGGLTLDVAHDNVTKVATGEAGNVTDRWILHNLNETIAKVTENFDKFEFGVAGHILYNFIWEEFANWYVELTKEVLYSDNEDDKVITRSVLLYTLDKILRLLHSIMPFVTEEIFGQYAEGSIVTAAYPTVNPAFEDLAAHTGVESLKDLIRAVRNARAEVNVAPSKPITILVKTSDSDLEAFFNSNVNYIKRFTNPEHLEIASTIPAPELAMSSVITGAEIFLPLVDLLNVEEELARLEKELAKWQKELDMVGKKLSNERFVANAKPEVVQKEKDKQADYQAKYDVTVARIDEMKKLVK.

The 'HIGH' region signature appears at 46 to 56 (PNVTGKLHLGH). Positions 520 to 524 (KMSKS) match the 'KMSKS' region motif. ATP is bound at residue lysine 523. Residues 809-844 (LVDLLNVEEELARLEKELAKWQKELDMVGKKLSNER) adopt a coiled-coil conformation.

The protein belongs to the class-I aminoacyl-tRNA synthetase family. ValS type 1 subfamily. In terms of assembly, monomer.

It is found in the cytoplasm. The catalysed reaction is tRNA(Val) + L-valine + ATP = L-valyl-tRNA(Val) + AMP + diphosphate. Catalyzes the attachment of valine to tRNA(Val). As ValRS can inadvertently accommodate and process structurally similar amino acids such as threonine, to avoid such errors, it has a 'posttransfer' editing activity that hydrolyzes mischarged Thr-tRNA(Val) in a tRNA-dependent manner. This chain is Valine--tRNA ligase, found in Streptococcus pneumoniae (strain ATCC BAA-255 / R6).